The sequence spans 365 residues: DNA replication and repair protein RecF (365 aa).

30-37 (GDNGEGKT) is a binding site for ATP.

It belongs to the RecF family.

The protein resides in the cytoplasm. In terms of biological role, the RecF protein is involved in DNA metabolism; it is required for DNA replication and normal SOS inducibility. RecF binds preferentially to single-stranded, linear DNA. It also seems to bind ATP. The chain is DNA replication and repair protein RecF from Leptospira interrogans serogroup Icterohaemorrhagiae serovar copenhageni (strain Fiocruz L1-130).